The primary structure comprises 651 residues: Threonine--tRNA ligase (651 aa).

The TGS domain occupies 1–64 (MSSVVHVTLP…EKDCTLQVLT (64 aa)). Residues 245–535 (DHRRLGPELG…LTEHYAGNFP (291 aa)) are catalytic. 3 residues coordinate Zn(2+): cysteine 336, histidine 387, and histidine 512.

The protein belongs to the class-II aminoacyl-tRNA synthetase family. In terms of assembly, homodimer. It depends on Zn(2+) as a cofactor.

It localises to the cytoplasm. It carries out the reaction tRNA(Thr) + L-threonine + ATP = L-threonyl-tRNA(Thr) + AMP + diphosphate + H(+). Catalyzes the attachment of threonine to tRNA(Thr) in a two-step reaction: L-threonine is first activated by ATP to form Thr-AMP and then transferred to the acceptor end of tRNA(Thr). Also edits incorrectly charged L-seryl-tRNA(Thr). This is Threonine--tRNA ligase from Symbiobacterium thermophilum (strain DSM 24528 / JCM 14929 / IAM 14863 / T).